The following is a 65-amino-acid chain: Small ribosomal subunit protein bS21 (65 aa).

Residues 43-65 (VDDRLKRARSKRRAQRANEESNA) are disordered. Basic residues predominate over residues 48 to 57 (KRARSKRRAQ).

It belongs to the bacterial ribosomal protein bS21 family.

The sequence is that of Small ribosomal subunit protein bS21 from Chloroherpeton thalassium (strain ATCC 35110 / GB-78).